The following is a 114-amino-acid chain: UPF0102 protein CD630_12710 (114 aa).

The protein belongs to the UPF0102 family.

The chain is UPF0102 protein CD630_12710 from Clostridioides difficile (strain 630) (Peptoclostridium difficile).